The following is a 345-amino-acid chain: Alkaline phosphatase isozyme conversion protein (345 aa).

The signal sequence occupies residues 1–24 (MFSALRHRTAALALGVCFILPVHA). Positions 117, 143, 176, and 204 each coordinate Zn(2+).

The protein belongs to the peptidase M28 family. M28C subfamily.

Functionally, this protein, presumably an aminopeptidase, mediates the conversion of E.coli alkaline phosphatase isozyme 1, to isozymes 2 and 3 by removing, one by one, the two N-terminal arginine residues. This is Alkaline phosphatase isozyme conversion protein (iap) from Escherichia coli (strain K12).